The primary structure comprises 181 residues: Adenine phosphoribosyltransferase (181 aa).

The protein belongs to the purine/pyrimidine phosphoribosyltransferase family. Homodimer.

The protein resides in the cytoplasm. It catalyses the reaction AMP + diphosphate = 5-phospho-alpha-D-ribose 1-diphosphate + adenine. It functions in the pathway purine metabolism; AMP biosynthesis via salvage pathway; AMP from adenine: step 1/1. In terms of biological role, catalyzes a salvage reaction resulting in the formation of AMP, that is energically less costly than de novo synthesis. The sequence is that of Adenine phosphoribosyltransferase from Cytophaga hutchinsonii (strain ATCC 33406 / DSM 1761 / CIP 103989 / NBRC 15051 / NCIMB 9469 / D465).